Here is a 138-residue protein sequence, read N- to C-terminus: Large ribosomal subunit protein uL16 (138 aa).

Basic residues predominate over residues 1-16; that stretch reads MLIPRRVKHRKQHHPG. Residues 1-24 form a disordered region; sequence MLIPRRVKHRKQHHPGRSGAATGG.

The protein belongs to the universal ribosomal protein uL16 family. Part of the 50S ribosomal subunit.

Its function is as follows. Binds 23S rRNA and is also seen to make contacts with the A and possibly P site tRNAs. The protein is Large ribosomal subunit protein uL16 of Arthrobacter sp. (strain FB24).